A 28-amino-acid chain; its full sequence is Apolipoprotein C-I (28 aa).

Belongs to the apolipoprotein C1 family.

The protein resides in the secreted. Its function is as follows. Inhibitor of lipoprotein binding to the low density lipoprotein (LDL) receptor, LDL receptor-related protein, and very low density lipoprotein (VLDL) receptor. Associates with high density lipoproteins (HDL) and the triacylglycerol-rich lipoproteins in the plasma and makes up about 10% of the protein of the VLDL and 2% of that of HDL. Appears to interfere directly with fatty acid uptake and is also the major plasma inhibitor of cholesteryl ester transfer protein (CETP). Binds free fatty acids and reduces their intracellular esterification. Modulates the interaction of APOE with beta-migrating VLDL and inhibits binding of beta-VLDL to the LDL receptor-related protein. In Oryctolagus cuniculus (Rabbit), this protein is Apolipoprotein C-I (APOC1).